We begin with the raw amino-acid sequence, 841 residues long: DNA ligase (841 aa).

NAD(+) contacts are provided by residues 33–37, 82–83, and Glu114; these read DAQYD and SL. The N6-AMP-lysine intermediate role is filled by Lys116. Residues Arg137, Glu174, Lys300, and Lys324 each coordinate NAD(+). Residues Cys418, Cys421, Cys436, and Cys442 each coordinate Zn(2+). The 84-residue stretch at 758-841 folds into the BRCT domain; that stretch reads EKTGPLDGQT…AFLGEHGQQR (84 aa).

Belongs to the NAD-dependent DNA ligase family. LigA subfamily. It depends on Mg(2+) as a cofactor. The cofactor is Mn(2+).

It catalyses the reaction NAD(+) + (deoxyribonucleotide)n-3'-hydroxyl + 5'-phospho-(deoxyribonucleotide)m = (deoxyribonucleotide)n+m + AMP + beta-nicotinamide D-nucleotide.. In terms of biological role, DNA ligase that catalyzes the formation of phosphodiester linkages between 5'-phosphoryl and 3'-hydroxyl groups in double-stranded DNA using NAD as a coenzyme and as the energy source for the reaction. It is essential for DNA replication and repair of damaged DNA. The chain is DNA ligase from Xanthomonas oryzae pv. oryzae (strain MAFF 311018).